A 337-amino-acid polypeptide reads, in one-letter code: Glucose transporter 2C (337 aa).

The segment at 1-22 (MTERRDNVSHAPDAIEGPNDGA) is disordered. Residues 1–43 (MTERRDNVSHAPDAIEGPNDGAHAEDTSPGFFSLENLGVAQVQ) lie on the Cytoplasmic side of the membrane. A helical membrane pass occupies residues 44-64 (VVGGTLNGFSIGFVAVYILLY). Residues 65–119 (EVATNCSLFKTTEACKAVGSYGCEWKDTEVCSWKKECDSDSDGVNPCESLIGYSS) are Extracellular-facing. Asparagine 69 carries N-linked (GlcNAc...) asparagine glycosylation. The chain crosses the membrane as a helical span at residues 120 to 140 (LYSGIFASAMIVGSMVGSIIA). Residues 141 to 152 (GKCITMFGLKKS) lie on the Cytoplasmic side of the membrane. Residues 153-173 (FIIVGVMSVVASALNHISVAT) form a helical membrane-spanning segment. Over 174–175 (NE) the chain is Extracellular. The helical transmembrane segment at 176 to 196 (FWVLCAGRVLMGIGLGVVCVI) threads the bilayer. Topologically, residues 197 to 214 (CPMYVNENAHPKLSKVDG) are cytoplasmic. Residues 215–235 (VLFQVFITFGIMLAAMLGLIL) traverse the membrane as a helical segment. Residues 236-250 (DKTVNYDNDPDMAGR) lie on the Extracellular side of the membrane. The chain crosses the membrane as a helical span at residues 251-271 (FHGFCAVSSVLSVAMFLVGMF). The Cytoplasmic portion of the chain corresponds to 272–300 (LRESTATFSQDDDGKADGGMDPNEYGWGQ). Residues 301–321 (MLWPLFMGAVTAGTLQLTGIN) form a helical membrane-spanning segment. Topologically, residues 322–337 (AVMNYAPKITENLGMD) are extracellular.

It belongs to the major facilitator superfamily. Sugar transporter (TC 2.A.1.1) family.

The protein localises to the membrane. Facilitative glucose transporter. In Trypanosoma brucei brucei, this protein is Glucose transporter 2C (THT2C).